Consider the following 118-residue polypeptide: Small ribosomal subunit protein uS13 (118 aa).

The segment at glycine 94–lysine 118 is disordered.

This sequence belongs to the universal ribosomal protein uS13 family. In terms of assembly, part of the 30S ribosomal subunit. Forms a loose heterodimer with protein S19. Forms two bridges to the 50S subunit in the 70S ribosome.

Located at the top of the head of the 30S subunit, it contacts several helices of the 16S rRNA. In the 70S ribosome it contacts the 23S rRNA (bridge B1a) and protein L5 of the 50S subunit (bridge B1b), connecting the 2 subunits; these bridges are implicated in subunit movement. Contacts the tRNAs in the A and P-sites. This chain is Small ribosomal subunit protein uS13, found in Haemophilus ducreyi (strain 35000HP / ATCC 700724).